We begin with the raw amino-acid sequence, 133 residues long: Major seminal plasma glycoprotein PSP-I (133 aa).

Positions Met-1–Gly-24 are cleaved as a signal peptide. Cys-30 and Cys-51 are oxidised to a cystine. The CUB domain occupies Cys-30–Asp-130. The N-linked (GlcNAc...) (complex) asparagine glycan is linked to Asn-71. Cys-74 and Cys-95 form a disulfide bridge.

As to quaternary structure, monomer or heterodimer with PSP-II (depending on the type of glycosylation of PSP-I). In terms of tissue distribution, seminal plasma or sperm.

It localises to the secreted. In terms of biological role, not yet identified, major porcine seminal plasma protein. Can bind soybean trypsin inhibitor after deglycosylation. This is Major seminal plasma glycoprotein PSP-I from Sus scrofa (Pig).